The primary structure comprises 856 residues: Valine--tRNA ligase (856 aa).

The 'HIGH' region signature appears at 47–57; that stretch reads PTASGVLHIGH. Residues 578 to 582 carry the 'KMSKS' region motif; it reads KMSKS. Lys581 is a binding site for ATP.

Belongs to the class-I aminoacyl-tRNA synthetase family. ValS type 2 subfamily. In terms of assembly, monomer.

It is found in the cytoplasm. It carries out the reaction tRNA(Val) + L-valine + ATP = L-valyl-tRNA(Val) + AMP + diphosphate. Catalyzes the attachment of valine to tRNA(Val). As ValRS can inadvertently accommodate and process structurally similar amino acids such as threonine, to avoid such errors, it has a 'posttransfer' editing activity that hydrolyzes mischarged Thr-tRNA(Val) in a tRNA-dependent manner. This chain is Valine--tRNA ligase, found in Tropheryma whipplei (strain Twist) (Whipple's bacillus).